Here is a 464-residue protein sequence, read N- to C-terminus: Interstitial collagenase A (464 aa).

An N-terminal signal peptide occupies residues M1 to S17. The propeptide at F18–P96 is activation peptide. The short motif at P87–V94 is the Cysteine switch element. C89 lines the Zn(2+) pocket. The tract at residues A95 to H274 is metalloprotease. A Ca(2+)-binding site is contributed by D155. Positions 165 and 167 each coordinate Zn(2+). Ca(2+) is bound by residues D172 and G173. H180 lines the Zn(2+) pocket. Ca(2+) contacts are provided by G187, G189, and D191. H193 provides a ligand contact to Zn(2+). D195 and E198 together coordinate Ca(2+). N-linked (GlcNAc...) asparagine glycosylation is present at N202. H215 contributes to the Zn(2+) binding site. Residue E216 is part of the active site. 2 residues coordinate Zn(2+): H219 and H225. 2 Hemopexin repeats span residues P273–L322 and P323–P369. C276 and C464 are joined by a disulfide. Residue D283 participates in Ca(2+) binding. N371 is a glycosylation site (N-linked (GlcNAc...) asparagine). Hemopexin repeat units follow at residues V372 to I420 and D421 to C464. Ca(2+) is bound by residues D376 and D425.

Belongs to the peptidase M10A family. The cofactor is Ca(2+). Zn(2+) is required as a cofactor.

It localises to the secreted. The protein resides in the extracellular space. The protein localises to the extracellular matrix. The catalysed reaction is Cleavage of the triple helix of collagen at about three-quarters of the length of the molecule from the N-terminus, at 775-Gly-|-Ile-776 in the alpha1(I) chain. Cleaves synthetic substrates and alpha-macroglobulins at bonds where P1' is a hydrophobic residue.. With respect to regulation, can be activated without removal of the activation peptide. Its function is as follows. Cleaves collagens of types I, II, and III at one site in the helical domain. Also cleaves collagens of types VII and X. Able to degrade synthetic peptides and type I and II fibrillar collagen. The sequence is that of Interstitial collagenase A (Mmp1a) from Mus musculus (Mouse).